The following is a 361-amino-acid chain: MGANSFGRFFTLTTFGESRSAGVGAVIDGCPAGIPLCADDIQKELNRRKPGSSGPFSTKRNEDDICEILSGVFEGRTLGSPIAVLVRNKETSSKDYENLKDVYRPGHADYSYDLKYGHRDYRGGGRSSGRETIGRLIGGAVAKKMLEAFAIKDGKKTIEVQVRAEEIAGIKTSLPLKEDEALPEPIFEKLSALASNGDSAGCILSCSVLNVSEGLGSPVFGKLDAVLSQALMSIGAVKGIEIGGGFYSASITGSENNDISKNFSGGILGGISCNMDYPLNLNHENGRKDENTCQIDFRIAVKPVPSIKMNQASFNKKGEKCMLSVGGNHDICLFPRIVPVVEAMCYLVLADAFLVSKIERF.

Residue Arg48 coordinates NADP(+). FMN-binding positions include 126 to 128 (RSS), Gly269, 302 to 306 (KPVPS), and Asn328.

It belongs to the chorismate synthase family. As to quaternary structure, homotetramer. It depends on FMNH2 as a cofactor.

The enzyme catalyses 5-O-(1-carboxyvinyl)-3-phosphoshikimate = chorismate + phosphate. It participates in metabolic intermediate biosynthesis; chorismate biosynthesis; chorismate from D-erythrose 4-phosphate and phosphoenolpyruvate: step 7/7. Its function is as follows. Catalyzes the anti-1,4-elimination of the C-3 phosphate and the C-6 proR hydrogen from 5-enolpyruvylshikimate-3-phosphate (EPSP) to yield chorismate, which is the branch point compound that serves as the starting substrate for the three terminal pathways of aromatic amino acid biosynthesis. This reaction introduces a second double bond into the aromatic ring system. The sequence is that of Chorismate synthase from Treponema denticola (strain ATCC 35405 / DSM 14222 / CIP 103919 / JCM 8153 / KCTC 15104).